Consider the following 743-residue polypeptide: Acetyl-coenzyme A synthetase, chloroplastic/glyoxysomal (743 aa).

Residues 1-84 (MKIGSPSSPI…LNAVVLGESL (84 aa)) constitute a chloroplast transit peptide. Asp613 is an active-site residue.

It belongs to the ATP-dependent AMP-binding enzyme family. Expressed in leaves, flower buds and young flowers.

The protein localises to the plastid. Its subcellular location is the chloroplast. The protein resides in the glyoxysome. It catalyses the reaction acetate + ATP + CoA = acetyl-CoA + AMP + diphosphate. Its function is as follows. Catalyzes the production of acetyl-CoA, an activated form of acetate that can be used for lipid synthesis or for energy generation. May play a limited role in the biosynthesis of lipids. This Arabidopsis thaliana (Mouse-ear cress) protein is Acetyl-coenzyme A synthetase, chloroplastic/glyoxysomal (ACS).